The chain runs to 553 residues: uncharacterized protein (553 aa).

2 helical membrane-spanning segments follow: residues 6-26 (IKIFLISLIFISGVYALQVDA) and 524-544 (SYWILGIIVVIAIVLVVGYVF).

The protein to M.jannaschii MJ0795 and MJ1506.

The protein resides in the cell membrane. This is an uncharacterized protein from Methanocaldococcus jannaschii (strain ATCC 43067 / DSM 2661 / JAL-1 / JCM 10045 / NBRC 100440) (Methanococcus jannaschii).